The sequence spans 574 residues: Cytochrome P450 4g15 (574 aa).

The tract at residues 288-327 (REREQNGGVDQTPSTAGSDEKDREKDKEKASPVAGLSYGQ) is disordered. Polar residues predominate over residues 295–304 (GVDQTPSTAG). Residues 305–317 (SDEKDREKDKEKA) show a composition bias toward basic and acidic residues. Residues E379 and C519 each coordinate heme.

Belongs to the cytochrome P450 family. Heme serves as cofactor. Expressed in larval brain cortex cells and ring glands and weakly in larval digestive system and adult nervous system.

It localises to the endoplasmic reticulum membrane. Its subcellular location is the microsome membrane. Its function is as follows. Probably involved in steroid hormones biosynthesis. In Drosophila melanogaster (Fruit fly), this protein is Cytochrome P450 4g15 (Cyp4g15).